Here is a 251-residue protein sequence, read N- to C-terminus: Pyrroloquinoline-quinone synthase (251 aa).

This sequence belongs to the PqqC family.

The catalysed reaction is 6-(2-amino-2-carboxyethyl)-7,8-dioxo-1,2,3,4,7,8-hexahydroquinoline-2,4-dicarboxylate + 3 O2 = pyrroloquinoline quinone + 2 H2O2 + 2 H2O + H(+). It functions in the pathway cofactor biosynthesis; pyrroloquinoline quinone biosynthesis. In terms of biological role, ring cyclization and eight-electron oxidation of 3a-(2-amino-2-carboxyethyl)-4,5-dioxo-4,5,6,7,8,9-hexahydroquinoline-7,9-dicarboxylic-acid to PQQ. The polypeptide is Pyrroloquinoline-quinone synthase (Pseudomonas syringae pv. syringae (strain B728a)).